A 649-amino-acid polypeptide reads, in one-letter code: Drebrin (649 aa).

Ala2 carries the post-translational modification N-acetylalanine. One can recognise an ADF-H domain in the interval 3–134 (GVSFSGHRLE…DAGAIGQRLS (132 aa)). 2 positions are modified to phosphoserine: Ser141 and Ser142. 2 stretches are compositionally biased toward basic and acidic residues: residues 208-236 (QERM…EEHR) and 288-298 (DNPREFFKQQE). 3 disordered regions span residues 208–420 (QERM…PAED), 477–502 (DLWP…PSGT), and 538–620 (EPPA…PPPV). Phosphothreonine is present on residues Thr331 and Thr335. The span at 334–348 (PTRSPSDSSTASTPV) shows a compositional bias: polar residues. 3 positions are modified to phosphoserine: Ser337, Ser339, and Ser345. At Thr346 the chain carries Phosphothreonine. Over residues 363–374 (QPPPLPPPPPPA) the composition is skewed to pro residues. Phosphoserine is present on Ser416. At Thr497 the chain carries Phosphothreonine. Polar residues predominate over residues 582–594 (NGETTQKEGTQAS). Phosphoserine is present on Ser601.

As to quaternary structure, interacts with RUFY3. Interacts with CXCR4; this interaction is enhanced by antigenic stimulation. Interacts (via ADF-H domain) with ZMYND8 (via N-terminus); the interaction leads to sequestering of ZMYND8 in the cytoplasm. Expressed in the brain, with expression in the molecular layer of the dentate gyrus, stratum pyramidale, and stratum radiatum of the hippocampus (at protein level). Also expressed in the terminal varicosities distributed along dendritic trees of pyramidal cells in CA4 and CA3 of the hippocampus (at protein level). Expressed in pyramidal cells in CA2, CA1 and the subiculum of the hippocampus (at protein level). Expressed in peripheral blood lymphocytes, including T-cells (at protein level). Expressed in the brain. Expressed in the heart, placenta, lung, skeletal muscle, kidney, pancreas, skin fibroblasts, gingival fibroblasts and bone-derived cells.

It localises to the cytoplasm. It is found in the cell projection. The protein localises to the dendrite. The protein resides in the cell cortex. Its subcellular location is the cell junction. It localises to the growth cone. In terms of biological role, actin cytoskeleton-organizing protein that plays a role in the formation of cell projections. Required for actin polymerization at immunological synapses (IS) and for the recruitment of the chemokine receptor CXCR4 to IS. Plays a role in dendritic spine morphogenesis and organization, including the localization of the dopamine receptor DRD1 to the dendritic spines. Involved in memory-related synaptic plasticity in the hippocampus. The polypeptide is Drebrin (DBN1) (Homo sapiens (Human)).